Consider the following 329-residue polypeptide: Acetyl-coenzyme A carboxylase carboxyl transferase subunit alpha (329 aa).

Residues 40–294 (QLESLAARRR…RAALERHLGE (255 aa)) enclose the CoA carboxyltransferase C-terminal domain.

Belongs to the AccA family. As to quaternary structure, acetyl-CoA carboxylase is a heterohexamer composed of biotin carboxyl carrier protein (AccB), biotin carboxylase (AccC) and two subunits each of ACCase subunit alpha (AccA) and ACCase subunit beta (AccD).

Its subcellular location is the cytoplasm. The catalysed reaction is N(6)-carboxybiotinyl-L-lysyl-[protein] + acetyl-CoA = N(6)-biotinyl-L-lysyl-[protein] + malonyl-CoA. The protein operates within lipid metabolism; malonyl-CoA biosynthesis; malonyl-CoA from acetyl-CoA: step 1/1. Component of the acetyl coenzyme A carboxylase (ACC) complex. First, biotin carboxylase catalyzes the carboxylation of biotin on its carrier protein (BCCP) and then the CO(2) group is transferred by the carboxyltransferase to acetyl-CoA to form malonyl-CoA. The sequence is that of Acetyl-coenzyme A carboxylase carboxyl transferase subunit alpha from Parasynechococcus marenigrum (strain WH8102).